The primary structure comprises 344 residues: MSVVLRHDWDRKELQALFDLPFPELLHRAASVHRAHFDPAQVQVSTLLSVKTGGCPEDCAYCPQAQRYDTGVSAQKLMETEEVVAKARQAKAAGASRFCMGAAWRSPKERDIPKVAAMIREVKAMGLETCATLGMLDAGQARALKDAGLDYYNHNLDTAPDYYDSIIHTRQYQDRLNTLEHVRDVGLKTCCGGIVGMGETREHRIGLLLALATLPAHPDSVPINQLVQVPGTPLHGTQQLDPFEFVRMIAVARIAMPKSMVRLSAGRETMSDELQALCFLAGANSIFYGEKLLTTGNPDTERDQALFQRLGLRPMQVTVDAAEHDHPGTVHAEITRSAACEHAA.

Positions A40 to R267 constitute a Radical SAM core domain. C55, C59, and C62 together coordinate [4Fe-4S] cluster. The [2Fe-2S] cluster site is built by C99, C130, C190, and R262.

Belongs to the radical SAM superfamily. Biotin synthase family. As to quaternary structure, homodimer. It depends on [4Fe-4S] cluster as a cofactor. The cofactor is [2Fe-2S] cluster.

The catalysed reaction is (4R,5S)-dethiobiotin + (sulfur carrier)-SH + 2 reduced [2Fe-2S]-[ferredoxin] + 2 S-adenosyl-L-methionine = (sulfur carrier)-H + biotin + 2 5'-deoxyadenosine + 2 L-methionine + 2 oxidized [2Fe-2S]-[ferredoxin]. The protein operates within cofactor biosynthesis; biotin biosynthesis; biotin from 7,8-diaminononanoate: step 2/2. Its function is as follows. Catalyzes the conversion of dethiobiotin (DTB) to biotin by the insertion of a sulfur atom into dethiobiotin via a radical-based mechanism. This Xanthomonas axonopodis pv. citri (strain 306) protein is Biotin synthase.